The primary structure comprises 545 residues: Prolyl 3-hydroxylase OGFOD1 (545 aa).

The interval 1 to 23 (MNGKRPADPGPARPMKKGKKQVS) is disordered. The 103-residue stretch at 137 to 239 (PTIDMSCAKY…RLSISGWFYG (103 aa)) folds into the Fe2OG dioxygenase domain. Positions 155 and 157 each coordinate Fe cation. 2-oxoglutarate is bound at residue Tyr-169. A Fe cation-binding site is contributed by His-218. Arg-230 serves as a coordination point for 2-oxoglutarate. The segment covering 371–380 (SEDDETEEKG) has biased composition (acidic residues). The segment at 371–437 (SEDDETEEKG…EAKKESSVPM (67 aa)) is disordered. Low complexity predominate over residues 383–393 (ETASAAAGTEE). Positions 402-417 (PENNQVAAGSHSQENG) are enriched in polar residues.

Belongs to the TPA1 family. Monomer. Fe(2+) serves as cofactor. It depends on L-ascorbate as a cofactor.

The protein localises to the cytoplasm. It localises to the nucleus. The catalysed reaction is [ribosomal protein uS12]-L-proline + 2-oxoglutarate + O2 = [ribosomal protein uS12]-(3S)-3-hydroxy-L-proline + succinate + CO2. Functionally, prolyl 3-hydroxylase that catalyzes 3-hydroxylation of 'Pro-62' of small ribosomal subunit uS12 (RPS23), thereby regulating protein translation termination efficiency. Involved in stress granule formation. This chain is Prolyl 3-hydroxylase OGFOD1 (Ogfod1), found in Mus musculus (Mouse).